The sequence spans 317 residues: MTEQMTVRGTLKGHSGWVTQIATTPKYPDMILSASRDKSIIMWKLTRDETNYGIPQRSLKGHSHFVSDVVISSDGQFALSGAWDGTLRLWDLTTGLTTRRFVGHTKDVLSVAFSADNRQIVSGSRDKTIKLWNTLGVCKYTIQDEGHTEWVSCVRFSPNSSNPIIVSCGWDKMVKVWNLANCKLKTNHIGHTGYLNTVTVSPDGSLCASGGKDGQAMLWDLNEGKHLYTLDSGDVINALCFSPNRYWLCAATGPSIKIWDLEGKIIVDELRQEVISTNSKAEPPQCTSLAWSADGQTLFAGYTDNLIRVWQVTIGTR.

WD repeat units lie at residues Gly13–Lys44, Gly61–Asp91, Gly103–Asn133, Gly146–Asn178, Gly190–Asp220, Asp231–Asp260, and Ala281–Gln311.

It belongs to the WD repeat G protein beta family. Ribosomal protein RACK1 subfamily.

The protein localises to the cytoplasm. Functionally, involved in the recruitment, assembly and/or regulation of a variety of signaling molecules. Interacts with a wide variety of proteins and plays a role in many cellular processes. Required for VANGL2 membrane localization, inhibits Wnt signaling and regulates cellular polarization and oriented cell division during gastrulation. The sequence is that of Small ribosomal subunit protein RACK1 (gnb2l1) from Oreochromis niloticus (Nile tilapia).